The primary structure comprises 126 residues: Small ribosomal subunit protein uS13 (126 aa).

A disordered region spans residues 95–126 (GLPVRGQRTQTNARTRKGKKKTVAGKKKAGRK). A compositionally biased stretch (basic residues) spans 108 to 126 (RTRKGKKKTVAGKKKAGRK).

This sequence belongs to the universal ribosomal protein uS13 family. In terms of assembly, part of the 30S ribosomal subunit. Forms a loose heterodimer with protein S19. Forms two bridges to the 50S subunit in the 70S ribosome.

In terms of biological role, located at the top of the head of the 30S subunit, it contacts several helices of the 16S rRNA. In the 70S ribosome it contacts the 23S rRNA (bridge B1a) and protein L5 of the 50S subunit (bridge B1b), connecting the 2 subunits; these bridges are implicated in subunit movement. Contacts the tRNAs in the A and P-sites. The sequence is that of Small ribosomal subunit protein uS13 from Thermobifida fusca (strain YX).